The following is a 152-amino-acid chain: Xanthine-guanine phosphoribosyltransferase (152 aa).

5-phospho-alpha-D-ribose 1-diphosphate-binding positions include 37–38, Arg69, and 88–96; these read RG and DDLVDTGGT. A GMP-binding site is contributed by Arg69. Asp89 lines the Mg(2+) pocket. 2 residues coordinate guanine: Asp92 and Ile135. Xanthine is bound by residues Asp92 and Ile135. GMP contacts are provided by residues 92–96 and 134–135; these read DTGGT and WI.

This sequence belongs to the purine/pyrimidine phosphoribosyltransferase family. XGPT subfamily. Homotetramer. Mg(2+) is required as a cofactor.

It localises to the cell inner membrane. It carries out the reaction GMP + diphosphate = guanine + 5-phospho-alpha-D-ribose 1-diphosphate. It catalyses the reaction XMP + diphosphate = xanthine + 5-phospho-alpha-D-ribose 1-diphosphate. The enzyme catalyses IMP + diphosphate = hypoxanthine + 5-phospho-alpha-D-ribose 1-diphosphate. It participates in purine metabolism; GMP biosynthesis via salvage pathway; GMP from guanine: step 1/1. It functions in the pathway purine metabolism; XMP biosynthesis via salvage pathway; XMP from xanthine: step 1/1. Purine salvage pathway enzyme that catalyzes the transfer of the ribosyl-5-phosphate group from 5-phospho-alpha-D-ribose 1-diphosphate (PRPP) to the N9 position of the 6-oxopurines guanine and xanthine to form the corresponding ribonucleotides GMP (guanosine 5'-monophosphate) and XMP (xanthosine 5'-monophosphate), with the release of PPi. To a lesser extent, also acts on hypoxanthine. The polypeptide is Xanthine-guanine phosphoribosyltransferase (Escherichia fergusonii (strain ATCC 35469 / DSM 13698 / CCUG 18766 / IAM 14443 / JCM 21226 / LMG 7866 / NBRC 102419 / NCTC 12128 / CDC 0568-73)).